Consider the following 483-residue polypeptide: NADH-quinone oxidoreductase subunit N (483 aa).

The next 13 helical transmembrane spans lie at 13–33 (PALP…YGVF), 45–65 (GALA…NAYV), 80–100 (FMKL…LTFI), 111–131 (PVLI…NGLI), 165–185 (FVLG…IYGF), 205–225 (IGVI…ISAV), 244–264 (AFFA…VLFV), 276–296 (IIVF…IGQS), 301–321 (LMAY…AAGT), 328–348 (VLIY…CILA), 373–393 (AFMM…AGFF), 407–429 (LYPL…LRIV), and 452–472 (VLGI…PLIL).

It belongs to the complex I subunit 2 family. As to quaternary structure, NDH-1 is composed of 14 different subunits. Subunits NuoA, H, J, K, L, M, N constitute the membrane sector of the complex.

The protein localises to the cell inner membrane. The enzyme catalyses a quinone + NADH + 5 H(+)(in) = a quinol + NAD(+) + 4 H(+)(out). NDH-1 shuttles electrons from NADH, via FMN and iron-sulfur (Fe-S) centers, to quinones in the respiratory chain. The immediate electron acceptor for the enzyme in this species is believed to be ubiquinone. Couples the redox reaction to proton translocation (for every two electrons transferred, four hydrogen ions are translocated across the cytoplasmic membrane), and thus conserves the redox energy in a proton gradient. This is NADH-quinone oxidoreductase subunit N from Parvibaculum lavamentivorans (strain DS-1 / DSM 13023 / NCIMB 13966).